Consider the following 486-residue polypeptide: Arginine/agmatine antiporter (486 aa).

The next 12 membrane-spanning stretches (helical) occupy residues 12-32 (LGAI…GIFS), 41-61 (AGAG…FFIA), 85-105 (GFGP…QIFG), 129-149 (NTIP…FIVL), 160-180 (IIGT…TAFA), 211-231 (STML…VMSA), 242-262 (ATLL…ILPF), 296-316 (VGLL…VAEI), 341-361 (LSLY…YFST), 367-387 (MLSI…AFLF), 418-438 (LWLI…LLAL), and 461-481 (EVTK…LFST).

It belongs to the amino acid-polyamine-organocation (APC) superfamily. Basic amino acid/polyamine antiporter (APA) (TC 2.A.3.2) family.

Its subcellular location is the cell inner membrane. Catalyzes the exchange of L-arginine for agmatine. The arginine uptake by the bacterium in the macrophage may be a virulence factor against the host innate immune response. The protein is Arginine/agmatine antiporter (aaxC) of Chlamydia caviae (strain ATCC VR-813 / DSM 19441 / 03DC25 / GPIC) (Chlamydophila caviae).